Consider the following 180-residue polypeptide: Large ribosomal subunit protein mL41 (180 aa).

Residues 1-21 (MKLVLVSTRGVRSLNSTNFPA) constitute a mitochondrion transit peptide.

Belongs to the mitochondrion-specific ribosomal protein mL41 family. As to quaternary structure, component of the mitochondrial ribosome large subunit (39S) which comprises a 16S rRNA and about 50 distinct proteins.

The protein localises to the mitochondrion. This is Large ribosomal subunit protein mL41 (mrpl-41) from Caenorhabditis elegans.